The primary structure comprises 633 residues: DNA topoisomerase 4 subunit B (633 aa).

Residues Tyr-5, Asn-45, Asp-72, 113–119 (GLHGVGA), and Lys-337 each bind ATP. The 116-residue stretch at 419–534 (KELFIVEGDS…LGHVYLALPP (116 aa)) folds into the Toprim domain. Glu-425, Asp-499, and Asp-501 together coordinate Mg(2+).

Belongs to the type II topoisomerase family. ParE type 2 subfamily. In terms of assembly, heterotetramer composed of ParC and ParE. Mg(2+) is required as a cofactor. It depends on Mn(2+) as a cofactor. Requires Ca(2+) as cofactor.

It catalyses the reaction ATP-dependent breakage, passage and rejoining of double-stranded DNA.. Topoisomerase IV is essential for chromosome segregation. It relaxes supercoiled DNA. Performs the decatenation events required during the replication of a circular DNA molecule. This is DNA topoisomerase 4 subunit B from Mycoplasma genitalium (strain ATCC 33530 / DSM 19775 / NCTC 10195 / G37) (Mycoplasmoides genitalium).